Here is a 241-residue protein sequence, read N- to C-terminus: Beta-casein (241 aa).

An N-terminal signal peptide occupies residues 1 to 15 (MKILILACLVALALA). A disordered region spans residues 21–45 (LNVSSETVESLSSNEPDSSSEESIT). Ser24 carries the phosphoserine; in form 4-P, form 5-P, form 6-P and form 7-P modification. Ser25 is subject to Phosphoserine; in form 7-P. Thr27 carries the post-translational modification Phosphothreonine; in form 6-P and form 7-P. Ser30 and Ser32 each carry phosphoserine. Residue Ser33 is modified to Phosphoserine; in form 5-P, form 6-P and form 7-P. A phosphoserine; in form 4-P, form 5-P, form 6-P and form 7-P mark is found at Ser38, Ser39, and Ser40. Deamidated asparagine is present on Asn150.

This sequence belongs to the beta-casein family. Post-translationally, there are at least five different forms found in milk, with varying degrees of phosphorylation. These include form 3-P which is phosphorylated at three sites that have not been determined, this form is present in very low amounts, form 4-P which is phosphorylated at four sites, form 5-P which is phosphorylated at five sites, form 6-P which is phosphorylated at six sites, and form 7-P which is phosphorylated at seven sites. In terms of processing, spontaneous deamidation of Asn-150 produces aspartate or isoaspartate. In terms of tissue distribution, mammary gland specific. Secreted in milk.

It is found in the secreted. Functionally, important role in determination of the surface properties of the casein micelles. The polypeptide is Beta-casein (Equus caballus (Horse)).